The chain runs to 185 residues: Ribosome-recycling factor (185 aa).

The segment at 137 to 166 (DGLKKAEKDGDIGQDESRGQSEKVQKMTDD) is disordered.

It belongs to the RRF family.

The protein resides in the cytoplasm. Functionally, responsible for the release of ribosomes from messenger RNA at the termination of protein biosynthesis. May increase the efficiency of translation by recycling ribosomes from one round of translation to another. The protein is Ribosome-recycling factor of Agrobacterium fabrum (strain C58 / ATCC 33970) (Agrobacterium tumefaciens (strain C58)).